Here is a 438-residue protein sequence, read N- to C-terminus: Transcriptional enhancer factor TEF-3 (438 aa).

The span at 1 to 18 (MTSEWSSPASPEGSNDSG) shows a compositional bias: polar residues. Disordered regions lie at residues 1–36 (MTSE…GVWS) and 195–217 (QPSL…STPA). The TEA DNA-binding region spans 28-104 (DNDAEGVWSP…QVLARRKARE (77 aa)). Residues 205–216 (SPTGLPPSSSTP) show a composition bias toward low complexity.

In terms of tissue distribution, enriched in cardiac and skeletal muscle.

Its subcellular location is the nucleus. Its function is as follows. Transcription factor which plays a key role in the Hippo signaling pathway, a pathway involved in organ size control and tumor suppression by restricting proliferation and promoting apoptosis. The core of this pathway is composed of a kinase cascade wherein MST1/MST2, in complex with its regulatory protein SAV1, phosphorylates and activates LATS1/2 in complex with its regulatory protein MOB1, which in turn phosphorylates and inactivates YAP1 oncoprotein and WWTR1/TAZ. Binds m-cat elements from muscle-specific promoters and differentially activate transcription. Isoform B has probably a transactivation capacity that is lacking in the other isoforms. Isoform D may be defective in DNA binding. This is Transcriptional enhancer factor TEF-3 (TEAD4) from Gallus gallus (Chicken).